Consider the following 283-residue polypeptide: MSATILDGKATKNTIFEELRPRVARLAEQGRTPGLATVLVGDDPASHSYVRAKHNDCAKVGINSIRKELPADASQSDVEAVVDELNADPACHGYIIQLPLPEQLDAGPLLERIAPEKDADGLHPISLGRLVLGEQAPLPCTPRGIIELLRRYDVPLAGARVAVVGRGITVGRPIGLLLTRRSENATVTLCHTGTKDLAEEVRRADIVVAAAGRPHLITADMVRPGAAVLDVGVTRTDSGLAGDVHPDVAEVAGFLSPNPGGIGPMTRAMLLSNVVEAAERAAS.

NADP(+) is bound by residues 165–167, threonine 192, and valine 233; that span reads GRG.

This sequence belongs to the tetrahydrofolate dehydrogenase/cyclohydrolase family. As to quaternary structure, homodimer.

It catalyses the reaction (6R)-5,10-methylene-5,6,7,8-tetrahydrofolate + NADP(+) = (6R)-5,10-methenyltetrahydrofolate + NADPH. The enzyme catalyses (6R)-5,10-methenyltetrahydrofolate + H2O = (6R)-10-formyltetrahydrofolate + H(+). Its pathway is one-carbon metabolism; tetrahydrofolate interconversion. Its function is as follows. Catalyzes the oxidation of 5,10-methylenetetrahydrofolate to 5,10-methenyltetrahydrofolate and then the hydrolysis of 5,10-methenyltetrahydrofolate to 10-formyltetrahydrofolate. This Saccharopolyspora erythraea (strain ATCC 11635 / DSM 40517 / JCM 4748 / NBRC 13426 / NCIMB 8594 / NRRL 2338) protein is Bifunctional protein FolD 2.